The chain runs to 157 residues: Protein Smg homolog (157 aa).

Belongs to the Smg family.

This Shewanella halifaxensis (strain HAW-EB4) protein is Protein Smg homolog.